The primary structure comprises 92 residues: Probable glutathione transferase (92 aa).

A GST N-terminal domain is found at 1–71 (RTCPYAQRAR…YLEEAFPDPP (71 aa)). The Nucleophile role is filled by Cys-3. Glutathione contacts are provided by residues Lys-30, Val-43, and 55–56 (ES).

This sequence belongs to the GST superfamily. Omega family.

The catalysed reaction is RX + glutathione = an S-substituted glutathione + a halide anion + H(+). It carries out the reaction L-dehydroascorbate + 2 glutathione = glutathione disulfide + L-ascorbate. It catalyses the reaction methylarsonate + 2 glutathione + H(+) = methylarsonous acid + glutathione disulfide + H2O. Its function is as follows. Exhibits glutathione-dependent thiol transferase activity. Has dehydroascorbate reductase activity and may contribute to the recycling of ascorbic acid. Participates in the biotransformation of inorganic arsenic and reduces monomethylarsonic acid (MMA). This chain is Probable glutathione transferase, found in Aplysia californica (California sea hare).